The chain runs to 804 residues: General transcription and DNA repair factor IIH helicase/translocase subunit XPB (804 aa).

Disordered stretches follow at residues 1–61 (MSLK…NSNE) and 220–255 (QSSK…KSSS). A compositionally biased stretch (acidic residues) spans 14–36 (PDEDLEEYSDYSDVDNYGEEDDD). Low complexity-rich tracts occupy residues 47-60 (NNNK…TNSN) and 220-229 (QSSKQKSSKP). Basic and acidic residues predominate over residues 236–255 (EDKKDITNDSSKETAEKSSS). Residues 335–497 (MFGNGRARSG…DLNFLIGPKM (163 aa)) enclose the Helicase ATP-binding domain. 348–355 (LPCGAGKT) provides a ligand contact to ATP. Positions 450–453 (DEVH) match the DEVH box motif. The region spanning 551–705 (QACQFLIDYH…KVITNLKGME (155 aa)) is the Helicase C-terminal domain. Disordered regions lie at residues 736 to 761 (DDGE…SSGS) and 782 to 804 (KQLK…TKRR). Residues 784-793 (LKKDSKEHHA) show a composition bias toward basic and acidic residues. The span at 794–804 (LFRKHLYTKRR) shows a compositional bias: basic residues.

Belongs to the helicase family. RAD25/XPB subfamily. Component of the 7-subunit TFIIH core complex composed of XPB/ptr8, XPD/rad15, ssl1, tfb1, tfb2, tfb4 and tfb5, which is active in NER. The core complex associates with the 3-subunit CTD-kinase module TFIIK composed of mcs2/cyclin H, mcs6/cdk7 and pmh1/tfb3 to form the 10-subunit holoenzyme (holo-TFIIH) active in transcription.

The protein resides in the nucleus. The catalysed reaction is Couples ATP hydrolysis with the unwinding of duplex DNA by translocating in the 3'-5' direction.. It catalyses the reaction ATP + H2O = ADP + phosphate + H(+). Probable ATP-dependent 3'-5' DNA helicase/translocase. Binds dsDNA rather than ssDNA, unzipping it in a translocase rather than classical helicase activity. Component of the general transcription and DNA repair factor IIH (TFIIH) core complex. When complexed to CDK-activating kinase (CAK), involved in RNA transcription by RNA polymerase II. Also involved in transcription-coupled nucleotide excision repair (NER) of damaged DNA. In NER, TFIIH acts by opening DNA around the lesion to allow the excision of the damaged oligonucleotide and its replacement by a new DNA fragment. The ATPase activity of XPB/ptr8, but not its helicase activity, is required for DNA opening. In transcription, TFIIH has an essential role in transcription initiation. When the pre-initiation complex (PIC) has been established, TFIIH is required for promoter opening and promoter escape. The ATP-dependent helicase activity of XPB/ptr8 is required for promoter escape but not for promoter opening. Plays a role in mRNA export. This is General transcription and DNA repair factor IIH helicase/translocase subunit XPB from Schizosaccharomyces pombe (strain 972 / ATCC 24843) (Fission yeast).